The chain runs to 206 residues: Imidazoleglycerol-phosphate dehydratase (206 aa).

Belongs to the imidazoleglycerol-phosphate dehydratase family.

The protein localises to the cytoplasm. The enzyme catalyses D-erythro-1-(imidazol-4-yl)glycerol 3-phosphate = 3-(imidazol-4-yl)-2-oxopropyl phosphate + H2O. Its pathway is amino-acid biosynthesis; L-histidine biosynthesis; L-histidine from 5-phospho-alpha-D-ribose 1-diphosphate: step 6/9. The sequence is that of Imidazoleglycerol-phosphate dehydratase from Leptospira interrogans serogroup Icterohaemorrhagiae serovar copenhageni (strain Fiocruz L1-130).